Reading from the N-terminus, the 398-residue chain is Ubiquitin-like modifier-activating enzyme 5 (398 aa).

The ATP site is built by Gly-76, Asp-97, Lys-120, Asn-143, and Asn-177. Residues Cys-219 and Cys-222 each coordinate Zn(2+). Residue Cys-243 is the Glycyl thioester intermediate of the active site. Positions 296 and 301 each coordinate Zn(2+).

Belongs to the ubiquitin-activating E1 family. UBA5 subfamily.

E1-like enzyme which activates UFM1. This chain is Ubiquitin-like modifier-activating enzyme 5, found in Drosophila grimshawi (Hawaiian fruit fly).